A 156-amino-acid polypeptide reads, in one-letter code: Crossover junction endodeoxyribonuclease RuvC (156 aa).

Catalysis depends on residues Asp-7, Glu-67, and Asp-140. Mg(2+) is bound by residues Asp-7, Glu-67, and Asp-140.

It belongs to the RuvC family. As to quaternary structure, homodimer which binds Holliday junction (HJ) DNA. The HJ becomes 2-fold symmetrical on binding to RuvC with unstacked arms; it has a different conformation from HJ DNA in complex with RuvA. In the full resolvosome a probable DNA-RuvA(4)-RuvB(12)-RuvC(2) complex forms which resolves the HJ. It depends on Mg(2+) as a cofactor.

It is found in the cytoplasm. The catalysed reaction is Endonucleolytic cleavage at a junction such as a reciprocal single-stranded crossover between two homologous DNA duplexes (Holliday junction).. In terms of biological role, the RuvA-RuvB-RuvC complex processes Holliday junction (HJ) DNA during genetic recombination and DNA repair. Endonuclease that resolves HJ intermediates. Cleaves cruciform DNA by making single-stranded nicks across the HJ at symmetrical positions within the homologous arms, yielding a 5'-phosphate and a 3'-hydroxyl group; requires a central core of homology in the junction. The consensus cleavage sequence is 5'-(A/T)TT(C/G)-3'. Cleavage occurs on the 3'-side of the TT dinucleotide at the point of strand exchange. HJ branch migration catalyzed by RuvA-RuvB allows RuvC to scan DNA until it finds its consensus sequence, where it cleaves and resolves the cruciform DNA. This is Crossover junction endodeoxyribonuclease RuvC from Rickettsia felis (strain ATCC VR-1525 / URRWXCal2) (Rickettsia azadi).